Consider the following 86-residue polypeptide: F(1)-ATPase inhibitor STF1, mitochondrial (86 aa).

Residues 1 to 23 (MLNRCISRNTRLPVNLRIASRFY) constitute a mitochondrion transit peptide. A Phosphoserine modification is found at S24.

This sequence belongs to the ATPase inhibitor family. In terms of assembly, monomer and homodimer. Monomeric at pH 5.0 and dimeric at either pH 6.5 or 8.0. The protein aggregates increasingly strongly with increasing pH.

It is found in the mitochondrion. In terms of biological role, endogenous low-affinity ATPase inhibitor, which inhibits specifically the reverse ATPase reaction of mitochondrial F(1)F(0)-type ATP synthase. Found to stabilize, together with STF2, a complex of intrinsic ATPase inhibitor INH1 and proton-translocating ATPase in mitochondrial membranes. Binds directly to purified F1-ATPase. The protein is F(1)-ATPase inhibitor STF1, mitochondrial (STF1) of Saccharomyces cerevisiae (strain ATCC 204508 / S288c) (Baker's yeast).